The primary structure comprises 349 residues: GMP reductase (349 aa).

108-131 lines the NADP(+) pocket; the sequence is IDFLKIKKIFLLSSELKYICIDVA. Residues Gly181 and Gly183 each contribute to the K(+) site. Catalysis depends on Cys186, which acts as the Thioimidate intermediate. 216 to 239 contacts NADP(+); it reads IISDGGCTVSGDIAKAFGGGADFV.

Belongs to the IMPDH/GMPR family. GuaC type 1 subfamily. In terms of assembly, homotetramer.

It catalyses the reaction IMP + NH4(+) + NADP(+) = GMP + NADPH + 2 H(+). Functionally, catalyzes the irreversible NADPH-dependent deamination of GMP to IMP. It functions in the conversion of nucleobase, nucleoside and nucleotide derivatives of G to A nucleotides, and in maintaining the intracellular balance of A and G nucleotides. In Buchnera aphidicola subsp. Acyrthosiphon pisum (strain 5A), this protein is GMP reductase.